The primary structure comprises 172 residues: Adenine phosphoribosyltransferase (172 aa).

This sequence belongs to the purine/pyrimidine phosphoribosyltransferase family. As to quaternary structure, homodimer.

The protein resides in the cytoplasm. The catalysed reaction is AMP + diphosphate = 5-phospho-alpha-D-ribose 1-diphosphate + adenine. Its pathway is purine metabolism; AMP biosynthesis via salvage pathway; AMP from adenine: step 1/1. Its function is as follows. Catalyzes a salvage reaction resulting in the formation of AMP, that is energically less costly than de novo synthesis. This chain is Adenine phosphoribosyltransferase, found in Nostoc punctiforme (strain ATCC 29133 / PCC 73102).